The sequence spans 113 residues: Protein ORF3 (113 aa).

Hydrophobic regions lie at residues 1–21 and 32–52; these read MGSP…CLCC and AVVG…GLIL. The interaction with host HPX stretch occupies residues 27 to 67; it reads ASRLAAVVGGATAVPAVVSGVTGLILSPSPSPIFIQPTPSL. The tract at residues 47–71 is interaction with the capsid protein; the sequence is VTGLILSPSPSPIFIQPTPSLPMSF. The residue at position 70 (serine 70) is a Phosphoserine; by host. The tract at residues 71-113 is homodimerization, and interaction with host AMBP/bikunin; the sequence is FHNPGLELALDSRPAPLAPLGVTSPSAPPLPPVVDLPQLGLRR. Residues 89–113 form a disordered region; the sequence is PLGVTSPSAPPLPPVVDLPQLGLRR. An interaction with host SRC, HCK, FYN, PIK3R3 and GRB2 region spans residues 94-103; that stretch reads SPSAPPLPPV. Positions 95–98 match the PTAP/PSAP motif motif; the sequence is PSAP.

Belongs to the hepevirus ORF3 protein family. Forms homooligomers. Interacts with host SRC, HCK, FYN, PIK3R3 and GRB2 (via SH3 domain); binding does not activate the kinases. Interacts with host AMBP/bikunin and AMBP/alpha-1-microglobulin peptides. Interacts with host HPX/hemopexin. Interacts (when phosphorylated) with capsid protein ORF2. Interacts with host TSG101; this interaction plays a role in viral release from the host cell. Interacts with host SIRPA; this interaction down-regulates the phosphorylation of host IRF3. In terms of processing, palmitoylated in the N-terminus.

Its subcellular location is the host endoplasmic reticulum membrane. The protein resides in the host cytoplasm. It localises to the host cytoskeleton. It is found in the virion. The protein localises to the host cell membrane. In terms of biological role, small multifunctional phosphoprotein involved in virion morphogenesis, egress and counteracting host innate immunity. Plays critical roles in the final steps of viral release by interacting with host TSG101, a member of the vacuolar protein-sorting pathway and using other cellular host proteins involved in vesicle formation pathway. Also acts as a viroporin and forms ion conductive pores allowing viral particle release. Impairs the generation of type I interferon by down-regulating host TLR3 and TLR7 as well as their downstream signaling pathways. Down-regulates the phosphorylation of host IRF3 via the interaction with host SIRP-alpha, thereby inhibiting IFN-I expression. Interacts with host microtubules. The protein is Protein ORF3 of Bandicota bengalensis (lesser bandicoot rat).